The primary structure comprises 363 residues: Phospho-N-acetylmuramoyl-pentapeptide-transferase (363 aa).

10 helical membrane-spanning segments follow: residues 33 to 53 (YAVL…GVLP), 82 to 102 (GVIF…PSFV), 105 to 125 (LILL…CAQV), 133 to 153 (GALD…FYFH), 166 to 186 (PVFV…WMSI), 198 to 218 (LSGA…YFLL), 227 to 247 (LLVP…ALAG), 271 to 291 (ALGF…LLLM), 295 to 315 (VILV…FFHV), and 340 to 360 (VLLR…GVLF).

The protein belongs to the glycosyltransferase 4 family. MraY subfamily. Mg(2+) serves as cofactor.

Its subcellular location is the cell inner membrane. The catalysed reaction is UDP-N-acetyl-alpha-D-muramoyl-L-alanyl-gamma-D-glutamyl-meso-2,6-diaminopimeloyl-D-alanyl-D-alanine + di-trans,octa-cis-undecaprenyl phosphate = di-trans,octa-cis-undecaprenyl diphospho-N-acetyl-alpha-D-muramoyl-L-alanyl-D-glutamyl-meso-2,6-diaminopimeloyl-D-alanyl-D-alanine + UMP. The protein operates within cell wall biogenesis; peptidoglycan biosynthesis. Functionally, catalyzes the initial step of the lipid cycle reactions in the biosynthesis of the cell wall peptidoglycan: transfers peptidoglycan precursor phospho-MurNAc-pentapeptide from UDP-MurNAc-pentapeptide onto the lipid carrier undecaprenyl phosphate, yielding undecaprenyl-pyrophosphoryl-MurNAc-pentapeptide, known as lipid I. This is Phospho-N-acetylmuramoyl-pentapeptide-transferase from Treponema pallidum (strain Nichols).